The primary structure comprises 424 residues: Serine hydroxymethyltransferase (424 aa).

(6S)-5,6,7,8-tetrahydrofolate-binding positions include L119 and 123–125 (GHL). K228 is modified (N6-(pyridoxal phosphate)lysine). (6S)-5,6,7,8-tetrahydrofolate is bound at residue 353–355 (SAF).

The protein belongs to the SHMT family. As to quaternary structure, homodimer. Pyridoxal 5'-phosphate serves as cofactor.

Its subcellular location is the cytoplasm. It catalyses the reaction (6R)-5,10-methylene-5,6,7,8-tetrahydrofolate + glycine + H2O = (6S)-5,6,7,8-tetrahydrofolate + L-serine. The protein operates within one-carbon metabolism; tetrahydrofolate interconversion. It functions in the pathway amino-acid biosynthesis; glycine biosynthesis; glycine from L-serine: step 1/1. Its function is as follows. Catalyzes the reversible interconversion of serine and glycine with tetrahydrofolate (THF) serving as the one-carbon carrier. Also exhibits THF-independent aldolase activity toward beta-hydroxyamino acids, producing glycine and aldehydes, via a retro-aldol mechanism. This is Serine hydroxymethyltransferase from Natronomonas pharaonis (strain ATCC 35678 / DSM 2160 / CIP 103997 / JCM 8858 / NBRC 14720 / NCIMB 2260 / Gabara) (Halobacterium pharaonis).